Here is a 525-residue protein sequence, read N- to C-terminus: Nucleolar complex protein 4 homolog B (525 aa).

Over residues 1–10 (MAARKAKHAF) the composition is skewed to basic residues. The tract at residues 1–21 (MAARKAKHAFRSQATQSDAER) is disordered. Helical transmembrane passes span 307-327 (AAYD…FILI), 358-378 (FFHL…LVAA), and 386-406 (LALT…CNLI).

Belongs to the CBF/MAK21 family.

The protein resides in the nucleus membrane. It localises to the nucleus. It is found in the nucleolus. This Xenopus laevis (African clawed frog) protein is Nucleolar complex protein 4 homolog B (noc4l-b).